The following is a 225-amino-acid chain: Suppressor of cytokine signaling 3 (225 aa).

A kinase inhibitory region (KIR) region spans residues 22 to 33 (LKTFSSKSEYQL). The segment at 34-45 (VVNAVRKLQESG) is extended SH2 subdomain (ESS). In terms of domain architecture, SH2 spans 46 to 142 (FYWSAVTGGE…TPSFSLPPTE (97 aa)). The disordered stretch occupies residues 131-160 (PGTPSFSLPPTEPSSEVPEQPPAQALPGST). In terms of domain architecture, SOCS box spans 177 to 224 (VLSRPLSSNVATLQHLCRKTVNGHLDSYEKVTQLPGPIREFLDQYDAP).

As to quaternary structure, interacts with multiple activated proteins of the tyrosine kinase signaling pathway including IGF1 receptor, insulin receptor and JAK2. Binding to JAK2 is mediated through the KIR and SH2 domains to a phosphorylated tyrosine residue within the JAK2 JH1 domain. Binds specific activated tyrosine residues of the leptin, EPO, IL12, GSCF and gp130 receptors. Interaction with CSNK1E stabilizes SOCS3 protein. Component of the probable ECS(SOCS3) E3 ubiquitin-protein ligase complex which contains CUL5, RNF7/RBX2, elongin BC complex and SOCS3. Interacts with CUL5, RNF7, ELOB and ELOC. Interacts with FGFR3. Interacts with INSR. Interacts with BCL10; this interaction may interfere with BCL10-binding with PELI2. Interacts with NOD2 (via CARD domain); the interaction promotes NOD2 degradation. Post-translationally, phosphorylated on tyrosine residues after stimulation by the cytokines, IL-2, EPO or IGF1. Low expression in lung, spleen and thymus. Expressed in Th2 but not TH1 cells.

Its pathway is protein modification; protein ubiquitination. Its function is as follows. SOCS family proteins form part of a classical negative feedback system that regulates cytokine signal transduction. SOCS3 is involved in negative regulation of cytokines that signal through the JAK/STAT pathway. Inhibits cytokine signal transduction by binding to tyrosine kinase receptors including IL6ST/gp130, LIF, erythropoietin, insulin, IL12, GCSF and leptin receptors. Binding to JAK2 inhibits its kinase activity and regulates IL6 signaling. Suppresses fetal liver erythropoiesis. Regulates onset and maintenance of allergic responses mediated by T-helper type 2 cells. Probable substrate recognition component of a SCF-like ECS (Elongin BC-CUL2/5-SOCS-box protein) E3 ubiquitin-protein ligase complex which mediates the ubiquitination and subsequent proteasomal degradation of target proteins. In Mus musculus (Mouse), this protein is Suppressor of cytokine signaling 3.